We begin with the raw amino-acid sequence, 151 residues long: MEVILLEQVVNLGKLGDKVAVKSGYARNYLIPQGRAVSATKENEAHFESRKAELEKAAGDKVAVAERCKQALADLGSVTIPAKAGTEGKLFGSVGAADIAEALTKAGVEIGKKEVRLPEGALRQVGEYELVIHLHPTVEAPIKVVVTGEEE.

It belongs to the bacterial ribosomal protein bL9 family.

Functionally, binds to the 23S rRNA. This Nitrosococcus oceani (strain ATCC 19707 / BCRC 17464 / JCM 30415 / NCIMB 11848 / C-107) protein is Large ribosomal subunit protein bL9.